A 654-amino-acid polypeptide reads, in one-letter code: tRNA 5-methylaminomethyl-2-thiouridine biosynthesis bifunctional protein MnmC (654 aa).

Residues 1–236 (MTDRIVPATL…KRAMLVGEFA (236 aa)) form a tRNA (mnm(5)s(2)U34)-methyltransferase region. An FAD-dependent cmnm(5)s(2)U34 oxidoreductase region spans residues 260 to 654 (IGAGLAGCAA…IRALRRGRVA (395 aa)).

It in the N-terminal section; belongs to the methyltransferase superfamily. tRNA (mnm(5)s(2)U34)-methyltransferase family. In the C-terminal section; belongs to the DAO family. FAD is required as a cofactor.

It localises to the cytoplasm. The catalysed reaction is 5-aminomethyl-2-thiouridine(34) in tRNA + S-adenosyl-L-methionine = 5-methylaminomethyl-2-thiouridine(34) in tRNA + S-adenosyl-L-homocysteine + H(+). Functionally, catalyzes the last two steps in the biosynthesis of 5-methylaminomethyl-2-thiouridine (mnm(5)s(2)U) at the wobble position (U34) in tRNA. Catalyzes the FAD-dependent demodification of cmnm(5)s(2)U34 to nm(5)s(2)U34, followed by the transfer of a methyl group from S-adenosyl-L-methionine to nm(5)s(2)U34, to form mnm(5)s(2)U34. The sequence is that of tRNA 5-methylaminomethyl-2-thiouridine biosynthesis bifunctional protein MnmC from Burkholderia thailandensis (strain ATCC 700388 / DSM 13276 / CCUG 48851 / CIP 106301 / E264).